The sequence spans 115 residues: MTRNDKRRIRHKRIVKKIRLTNLNNRVVLIVIKSLKNISVQAWDFSKNVVLTSSSSLQLKLKNGNKENAKLVGMDIATKLIKLNQKDVVFDTGGSKYHGRIAALAEGARAKGLNF.

It belongs to the universal ribosomal protein uL18 family. As to quaternary structure, part of the 50S ribosomal subunit; part of the 5S rRNA/L5/L18/L25 subcomplex. Contacts the 5S and 23S rRNAs.

Its function is as follows. This is one of the proteins that bind and probably mediate the attachment of the 5S RNA into the large ribosomal subunit, where it forms part of the central protuberance. The chain is Large ribosomal subunit protein uL18 from Mycoplasma genitalium (strain ATCC 33530 / DSM 19775 / NCTC 10195 / G37) (Mycoplasmoides genitalium).